The following is a 412-amino-acid chain: Tyrosine--tRNA ligase (412 aa).

Residue tyrosine 31 coordinates L-tyrosine. The 'HIGH' region signature appears at 36-45 (PTAPSLHIGH). The L-tyrosine site is built by tyrosine 162 and glutamine 166. Positions 222-226 (KIGKT) match the 'KMSKS' region motif. Residue lysine 225 coordinates ATP. The S4 RNA-binding domain occupies 345–411 (KRWLDIVVEL…GKRKKQVIDL (67 aa)).

This sequence belongs to the class-I aminoacyl-tRNA synthetase family. TyrS type 1 subfamily. In terms of assembly, homodimer.

It localises to the cytoplasm. It catalyses the reaction tRNA(Tyr) + L-tyrosine + ATP = L-tyrosyl-tRNA(Tyr) + AMP + diphosphate + H(+). Its function is as follows. Catalyzes the attachment of tyrosine to tRNA(Tyr) in a two-step reaction: tyrosine is first activated by ATP to form Tyr-AMP and then transferred to the acceptor end of tRNA(Tyr). The polypeptide is Tyrosine--tRNA ligase (Chlamydia trachomatis serovar L2 (strain ATCC VR-902B / DSM 19102 / 434/Bu)).